Reading from the N-terminus, the 339-residue chain is Methionine import ATP-binding protein MetN 2 (339 aa).

One can recognise an ABC transporter domain in the interval Ile2–Val241. Gly38–Ser45 contributes to the ATP binding site.

Belongs to the ABC transporter superfamily. Methionine importer (TC 3.A.1.24) family. In terms of assembly, the complex is composed of two ATP-binding proteins (MetN), two transmembrane proteins (MetI) and a solute-binding protein (MetQ).

Its subcellular location is the cell membrane. The enzyme catalyses L-methionine(out) + ATP + H2O = L-methionine(in) + ADP + phosphate + H(+). It carries out the reaction D-methionine(out) + ATP + H2O = D-methionine(in) + ADP + phosphate + H(+). Functionally, part of the ABC transporter complex MetNIQ involved in methionine import. Responsible for energy coupling to the transport system. The polypeptide is Methionine import ATP-binding protein MetN 2 (Bacillus cereus (strain ATCC 14579 / DSM 31 / CCUG 7414 / JCM 2152 / NBRC 15305 / NCIMB 9373 / NCTC 2599 / NRRL B-3711)).